The chain runs to 114 residues: T cell receptor beta variable 3-1 (114 aa).

An N-terminal signal peptide occupies residues 1-21 (MGCRLLCCVVFCLLQAGPLDT). Positions 22–114 (AVSQTPKYLV…SAVYFCASSQ (93 aa)) constitute an Ig-like domain. A disulfide bridge connects residues cysteine 42 and cysteine 110. A glycan (N-linked (GlcNAc...) asparagine) is linked at asparagine 76.

In terms of assembly, alpha-beta TR is a heterodimer composed of an alpha and beta chain; disulfide-linked. The alpha-beta TR is associated with the transmembrane signaling CD3 coreceptor proteins to form the TR-CD3 (TcR or TCR). The assembly of alpha-beta TR heterodimers with CD3 occurs in the endoplasmic reticulum where a single alpha-beta TR heterodimer associates with one CD3D-CD3E heterodimer, one CD3G-CD3E heterodimer and one CD247 homodimer forming a stable octameric structure. CD3D-CD3E and CD3G-CD3E heterodimers preferentially associate with TR alpha and TR beta chains, respectively. The association of the CD247 homodimer is the last step of TcR assembly in the endoplasmic reticulum and is required for transport to the cell surface.

Its subcellular location is the cell membrane. Functionally, v region of the variable domain of T cell receptor (TR) beta chain that participates in the antigen recognition. Alpha-beta T cell receptors are antigen specific receptors which are essential to the immune response and are present on the cell surface of T lymphocytes. Recognize peptide-major histocompatibility (MH) (pMH) complexes that are displayed by antigen presenting cells (APC), a prerequisite for efficient T cell adaptive immunity against pathogens. Binding of alpha-beta TR to pMH complex initiates TR-CD3 clustering on the cell surface and intracellular activation of LCK that phosphorylates the ITAM motifs of CD3G, CD3D, CD3E and CD247 enabling the recruitment of ZAP70. In turn ZAP70 phosphorylates LAT, which recruits numerous signaling molecules to form the LAT signalosome. The LAT signalosome propagates signal branching to three major signaling pathways, the calcium, the mitogen-activated protein kinase (MAPK) kinase and the nuclear factor NF-kappa-B (NF-kB) pathways, leading to the mobilization of transcription factors that are critical for gene expression and essential for T cell growth and differentiation. The T cell repertoire is generated in the thymus, by V-(D)-J rearrangement. This repertoire is then shaped by intrathymic selection events to generate a peripheral T cell pool of self-MH restricted, non-autoaggressive T cells. Post-thymic interaction of alpha-beta TR with the pMH complexes shapes TR structural and functional avidity. The protein is T cell receptor beta variable 3-1 of Homo sapiens (Human).